Here is a 721-residue protein sequence, read N- to C-terminus: Catalase-peroxidase 1 (721 aa).

The segment at residues 98-226 is a cross-link (tryptophyl-tyrosyl-methioninium (Trp-Tyr) (with M-252)); it reads WHAAGTYRIA…LAAVMMGLIY (129 aa). H99 serves as the catalytic Proton acceptor. The tryptophyl-tyrosyl-methioninium (Tyr-Met) (with W-98) cross-link spans 226–252; sequence YVNPEGVDGQPDPLKTAHDVRVTFARM. Position 267 (H267) interacts with heme b.

Belongs to the peroxidase family. Peroxidase/catalase subfamily. In terms of assembly, homodimer or homotetramer. It depends on heme b as a cofactor. Formation of the three residue Trp-Tyr-Met cross-link is important for the catalase, but not the peroxidase activity of the enzyme.

The catalysed reaction is H2O2 + AH2 = A + 2 H2O. The enzyme catalyses 2 H2O2 = O2 + 2 H2O. Bifunctional enzyme with both catalase and broad-spectrum peroxidase activity. The sequence is that of Catalase-peroxidase 1 from Vibrio parahaemolyticus serotype O3:K6 (strain RIMD 2210633).